We begin with the raw amino-acid sequence, 392 residues long: Acetyl-CoA acetyltransferase (392 aa).

The active-site Acyl-thioester intermediate is the Cys87. Residues His348 and Cys378 each act as proton acceptor in the active site.

It belongs to the thiolase-like superfamily. Thiolase family.

Its subcellular location is the cytoplasm. The catalysed reaction is 2 acetyl-CoA = acetoacetyl-CoA + CoA. The protein operates within metabolic intermediate biosynthesis; (R)-mevalonate biosynthesis; (R)-mevalonate from acetyl-CoA: step 1/3. In terms of biological role, involved in the production of polyhydroxyalkonic acids (PHAs), composed primarily of 3-hydroxybutyric acid (3HB) and 3-hydroxyvaleric acid (3HV). This is Acetyl-CoA acetyltransferase (phaA) from Chromobacterium violaceum (strain ATCC 12472 / DSM 30191 / JCM 1249 / CCUG 213 / NBRC 12614 / NCIMB 9131 / NCTC 9757 / MK).